A 384-amino-acid polypeptide reads, in one-letter code: MTGIPPPSRFPEQPIPPWRRAVLKVGSSLLAADGGGLSPRFALDLAHFVSANITAGRQLVIVSSGAVAAGRALIPPLPESGGALAARQALAALGQAQLIALWQRFFDRPVAQVLLTHDDLRNRRRYLNARATLRELLHLGTLPVVNENDTVSVDELKLGDNDNLAAIVAALIDAQALFIATDIDGLYTTDPRHHSDAQPLHEVRTLTPENLAMAGDSSSTVGTGGMRTKLEAALKAGAAGIDTYLFNGRSSDVVRGLAQHRLRGTRIHPTCTPIAARKYWLRHAPVEPGAILIDAGAAAALAQQGASLLPGGVLSAEGDFRRGDMIQIATRSPDHPSHPLARGLVQYSAADVRRIAGCHSRDIQTLLGYTYGDTIVHRDDLVLL.

Position 24 (K24) interacts with ATP. Substrate contacts are provided by S64, D149, and N161. ATP is bound by residues 181–182 (TD) and 223–229 (TGGMRTK). Positions 288-370 (PGAILIDAGA…RDIQTLLGYT (83 aa)) constitute a PUA domain.

The protein belongs to the glutamate 5-kinase family.

The protein resides in the cytoplasm. The enzyme catalyses L-glutamate + ATP = L-glutamyl 5-phosphate + ADP. The protein operates within amino-acid biosynthesis; L-proline biosynthesis; L-glutamate 5-semialdehyde from L-glutamate: step 1/2. In terms of biological role, catalyzes the transfer of a phosphate group to glutamate to form L-glutamate 5-phosphate. This Xylella fastidiosa (strain M23) protein is Glutamate 5-kinase.